A 246-amino-acid chain; its full sequence is Transmembrane protein 41 homolog (246 aa).

Helical transmembrane passes span 12–32 (WLVL…YSNF), 68–88 (SVVL…AIPG), 101–123 (PFYV…CYTI), 159–179 (IFLR…SPVL), 182–202 (PLAP…FLYI), and 219–239 (SWSS…PILL).

Belongs to the TMEM41 family.

It is found in the membrane. This is Transmembrane protein 41 homolog (tag-175) from Caenorhabditis elegans.